Here is a 487-residue protein sequence, read N- to C-terminus: E3 ubiquitin-protein ligase RNF8 (487 aa).

Residues 38-92 form the FHA domain; sequence VTIGRGFSVTYQLISKVCPLMISRNHCVLKQNPEGQWTIMDNKSLNGVWLNRERL. The required for interaction with PIWIL1 stretch occupies residues 68–72; the sequence is QNPEG. Positions 135–195 are disordered; the sequence is CLAPKNDHTT…PEKLHGKGEA (61 aa). A Phosphoserine modification is found at Ser157. Residues 184 to 193 show a composition bias toward basic and acidic residues; it reads AEPEKLHGKG. The RING-type zinc-finger motif lies at 405–443; that stretch reads CIICSEYFIEAVTLNCAHSFCSFCISEWMKRKVECPICR.

The protein belongs to the RNF8 family. In terms of assembly, homodimer. Forms a E2-E3 ubiquitin ligase complex composed of the RNF8 homodimer and a E2 heterodimer of UBE2N and UBE2V2. Interacts with class III E2s, including UBE2E1, UBE2E2, and UBE2E3 and with UBE2N. Interacts with RXRA. Interacts (via FHA domain) with phosphorylated HERC2 (via C-terminus). Interacts with PIWIL1; leading to sequester RNF8 in the cytoplasm. Interacts with WRAP53/TCAB1. Autoubiquitinated through 'Lys-48' and 'Lys-63' of ubiquitin. 'Lys-63' polyubiquitination is mediated by UBE2N. 'Lys-29'-type polyubiquitination is also observed, but it doesn't require its own functional RING-type zinc finger.

The protein localises to the nucleus. Its subcellular location is the cytoplasm. The protein resides in the midbody. It is found in the chromosome. It localises to the telomere. The catalysed reaction is S-ubiquitinyl-[E2 ubiquitin-conjugating enzyme]-L-cysteine + [acceptor protein]-L-lysine = [E2 ubiquitin-conjugating enzyme]-L-cysteine + N(6)-ubiquitinyl-[acceptor protein]-L-lysine.. It participates in protein modification; protein ubiquitination. E3 ubiquitin-protein ligase that plays a key role in DNA damage signaling via 2 distinct roles: by mediating the 'Lys-63'-linked ubiquitination of histones H2A and H2AX and promoting the recruitment of DNA repair proteins at double-strand breaks (DSBs) sites, and by catalyzing 'Lys-48'-linked ubiquitination to remove target proteins from DNA damage sites. Following DNA DSBs, it is recruited to the sites of damage by ATM-phosphorylated MDC1 and catalyzes the 'Lys-63'-linked ubiquitination of histones H2A and H2AX, thereby promoting the formation of TP53BP1 and BRCA1 ionizing radiation-induced foci (IRIF). Also controls the recruitment of UIMC1-BRCC3 (RAP80-BRCC36) and PAXIP1/PTIP to DNA damage sites. Promotes the recruitment of NBN to DNA damage sites by catalyzing 'Lys-6'-linked ubiquitination of NBN. Also recruited at DNA interstrand cross-links (ICLs) sites and catalyzes 'Lys-63'-linked ubiquitination of histones H2A and H2AX, leading to recruitment of FAAP20 and Fanconi anemia (FA) complex, followed by interstrand cross-link repair. H2A ubiquitination also mediates the ATM-dependent transcriptional silencing at regions flanking DSBs in cis, a mechanism to avoid collision between transcription and repair intermediates. Promotes the formation of 'Lys-63'-linked polyubiquitin chains via interactions with the specific ubiquitin-conjugating UBE2N/UBC13 and ubiquitinates non-histone substrates such as PCNA. Substrates that are polyubiquitinated at 'Lys-63' are usually not targeted for degradation. Also catalyzes the formation of 'Lys-48'-linked polyubiquitin chains via interaction with the ubiquitin-conjugating UBE2L6/UBCH8, leading to degradation of substrate proteins such as CHEK2, JMJD2A/KDM4A and KU80/XRCC5: it is still unclear how the preference toward 'Lys-48'- versus 'Lys-63'-linked ubiquitination is regulated but it could be due to RNF8 ability to interact with specific E2 specific ligases. For instance, interaction with phosphorylated HERC2 promotes the association between RNF8 and UBE2N/UBC13 and favors the specific formation of 'Lys-63'-linked ubiquitin chains. Promotes non-homologous end joining (NHEJ) by promoting the 'Lys-48'-linked ubiquitination and degradation the of KU80/XRCC5. Following DNA damage, mediates the ubiquitination and degradation of JMJD2A/KDM4A in collaboration with RNF168, leading to unmask H4K20me2 mark and promote the recruitment of TP53BP1 at DNA damage sites. Following DNA damage, mediates the ubiquitination and degradation of POLD4/p12, a subunit of DNA polymerase delta. In the absence of POLD4, DNA polymerase delta complex exhibits higher proofreading activity. In addition to its function in damage signaling, also plays a role in higher-order chromatin structure by mediating extensive chromatin decondensation. Involved in the activation of ATM by promoting histone H2B ubiquitination, which indirectly triggers histone H4 'Lys-16' acetylation (H4K16ac), establishing a chromatin environment that promotes efficient activation of ATM kinase. Required in the testis, where it plays a role in the replacement of histones during spermatogenesis. At uncapped telomeres, promotes the joining of deprotected chromosome ends by inducing H2A ubiquitination and TP53BP1 recruitment, suggesting that it may enhance cancer development by aggravating telomere-induced genome instability in case of telomeric crisis. Promotes the assembly of RAD51 at DNA DSBs in the absence of BRCA1 and TP53BP1 Also involved in class switch recombination in immune system, via its role in regulation of DSBs repair. May be required for proper exit from mitosis after spindle checkpoint activation and may regulate cytokinesis. May play a role in the regulation of RXRA-mediated transcriptional activity. Not involved in RXRA ubiquitination by UBE2E2. This chain is E3 ubiquitin-protein ligase RNF8, found in Rattus norvegicus (Rat).